The chain runs to 328 residues: Bcl-2/adenovirus E1B 19 kDa-interacting protein 2-like protein (328 aa).

The segment covering 1 to 22 (MKLGELELREEWQDEEFPRLLP) has biased composition (basic and acidic residues). The disordered stretch occupies residues 1–116 (MKLGELELRE…DSGHEFEWED (116 aa)). A compositionally biased stretch (polar residues) spans 36–45 (RGSQAGTPSS). Residues 76-89 (ASPTRSASSSSAGS) are compositionally biased toward low complexity. A compositionally biased stretch (acidic residues) spans 92 to 105 (LEVDELETPSDSEQ). Over residues 107-116 (DSGHEFEWED) the composition is skewed to basic and acidic residues. The CRAL-TRIO domain occupies 162 to 323 (DMTIIEPYKK…VVRQLDRDLH (162 aa)).

As to quaternary structure, homodimer. Interacts with BCL2, ARHGAP1, MIF and GFER.

Its function is as follows. May be a bridge molecule between BCL2 and ARHGAP1/CDC42 in promoting cell death. The chain is Bcl-2/adenovirus E1B 19 kDa-interacting protein 2-like protein (Bnipl) from Mus musculus (Mouse).